The chain runs to 41 residues: Photosystem I reaction center subunit IX (41 aa).

The helical transmembrane segment at 7–27 (YLSTAPVLLTLWMTFTAGFII) threads the bilayer.

The protein belongs to the PsaJ family.

It localises to the plastid. The protein resides in the chloroplast thylakoid membrane. Functionally, may help in the organization of the PsaE and PsaF subunits. The sequence is that of Photosystem I reaction center subunit IX from Thalassiosira pseudonana (Marine diatom).